The primary structure comprises 329 residues: Nicotianamine synthase 8 (329 aa).

The protein belongs to the nicotianamine synthase (NAS)-like family. In terms of assembly, homotrimer.

It carries out the reaction 3 S-adenosyl-L-methionine = nicotianamine + 3 S-methyl-5'-thioadenosine + 3 H(+). Synthesizes nicotianamine, a polyamine that is the first intermediate in the synthesis of the phytosiderophores of the mugineic acid type found in gramineae which serve as a sensor for the physiological iron status within the plant, and/or might be involved in the transport of iron. This is Nicotianamine synthase 8 (NAS8) from Hordeum vulgare (Barley).